A 734-amino-acid polypeptide reads, in one-letter code: MALRFPRFSQGLAQDPTTRRIWFGIATAHDFESHDDITEERLYQNIFASHFGQLAIIFLWTSGNLFHVAWQGNFESWVQDPLHVRPIAHAIWDPHFGQPAVEAFTRGGALGPVNIAYSGVYQWWYTIGLRTNEDLYTGALFLLFLSAISLIAGWLHLQPKWKPSVSWFKNAESRLNHHLSGLFGVSSLAWTGHLVHVAIPASRGESVRWNNFLDVLPHPQGLGPLFTGQWNLYAQNPDSSSHLFGTAEGAGTAILTLLGGFHPQTQSLWLTDIAHHHLAIAFIFLVAGHMYRTNFGIGHSMKDLLDAHIPPGGRLGRGHKGLYDTINNSLHFQLGLALASLGVITSLVAQHMYSLPAYAFIAQDFTTQAALYTHHQYIAGFIMTGAFAHGAILVIRDYNPEQNEDNVLARMLDHKEAIISHLSWASLFLGFHTLGLYVHNDVMLAFGTPEKQILIEPIFAQWIQSAHGKTSYGFDVLLSSTSGPAFNAGRSIWLPGWLNAVNENSNSLFLTIGPGDFLVHHAIALGLHTTTLILVKGALDARGSKLMPDKKDFGYSFPCDGPGRGGTCDISAWDAFYLAVFWMLNTIGWVTFYWHWKHITLWQGNVSQFNESSTYLMGWLRDYLWLNSSQLINGYNPFGMNSLSVWAWMFLFGHLVWATGFMFLISWRGYWQELIETLAWAHERTPLANLIRWRDKPVALSIVQARLVGLAHFSVGYIFTYAAFLIASTSGKFG.

Transmembrane regions (helical) follow at residues 46–69 (IFAS…FHVA), 135–158 (LYTG…LHLQ), 175–199 (LNHH…HVAI), 273–291 (IAHH…GHMY), 330–353 (LHFQ…QHMY), 369–395 (AALY…ILVI), 417–439 (AIIS…LYVH), and 517–535 (FLVH…LILV). C559 and C568 together coordinate [4Fe-4S] cluster. 2 consecutive transmembrane segments (helical) span residues 575 to 596 (AFYL…YWHW) and 643 to 665 (LSVW…MFLI). Chlorophyll a-binding residues include H654, M662, and Y670. W671 contacts phylloquinone. The chain crosses the membrane as a helical span at residues 707–727 (LVGLAHFSVGYIFTYAAFLIA).

This sequence belongs to the PsaA/PsaB family. In terms of assembly, the PsaA/B heterodimer binds the P700 chlorophyll special pair and subsequent electron acceptors. PSI consists of a core antenna complex that captures photons, and an electron transfer chain that converts photonic excitation into a charge separation. The eukaryotic PSI reaction center is composed of at least 11 subunits. Requires P700 is a chlorophyll a/chlorophyll a' dimer, A0 is one or more chlorophyll a, A1 is one or both phylloquinones and FX is a shared 4Fe-4S iron-sulfur center. as cofactor.

The protein resides in the plastid. It localises to the chloroplast thylakoid membrane. The enzyme catalyses reduced [plastocyanin] + hnu + oxidized [2Fe-2S]-[ferredoxin] = oxidized [plastocyanin] + reduced [2Fe-2S]-[ferredoxin]. Functionally, psaA and PsaB bind P700, the primary electron donor of photosystem I (PSI), as well as the electron acceptors A0, A1 and FX. PSI is a plastocyanin-ferredoxin oxidoreductase, converting photonic excitation into a charge separation, which transfers an electron from the donor P700 chlorophyll pair to the spectroscopically characterized acceptors A0, A1, FX, FA and FB in turn. Oxidized P700 is reduced on the lumenal side of the thylakoid membrane by plastocyanin. The protein is Photosystem I P700 chlorophyll a apoprotein A2 of Atropa belladonna (Belladonna).